Consider the following 204-residue polypeptide: Protein phosphatase 1 regulatory subunit 1B (204 aa).

M1 bears the N-acetylmethionine mark. The tract at residues 1-204 (MDPKDRKKIQ…QRPSPSEPGT (204 aa)) is disordered. T34 bears the Phosphothreonine; by PKA mark. The segment covering 41 to 63 (LSEHSSPEEEASPHQRASGEGHH) has biased composition (basic and acidic residues). 2 positions are modified to phosphoserine: S45 and S46. T75 carries the phosphothreonine; by CDK5 modification. Positions 89–100 (HLQSISNLNENQ) are enriched in polar residues. S102 bears the Phosphoserine mark. Positions 109 to 118 (GELRELGYPR) are enriched in basic and acidic residues. 2 stretches are compositionally biased toward acidic residues: residues 119–138 (EEDE…EDSQ) and 170–183 (DESE…DQVE). S137 carries the post-translational modification Phosphoserine. S198 is modified (phosphoserine).

It belongs to the protein phosphatase inhibitor 1 family. In terms of processing, dopamine- and cyclic AMP-regulated neuronal phosphoprotein. Phosphorylation of Thr-34 is required for activity.

The protein resides in the cytoplasm. Its function is as follows. Inhibitor of protein-phosphatase 1. This Homo sapiens (Human) protein is Protein phosphatase 1 regulatory subunit 1B (PPP1R1B).